The primary structure comprises 341 residues: Serine/threonine-protein kinase PDIK1L (341 aa).

Residues 8-334 form the Protein kinase domain; the sequence is YDLIREVGRG…LELRLVQIAF (327 aa). Residues 14–22 and Lys37 each bind ATP; that span reads VGRGSYGVV. Residue Asp164 is the Proton acceptor of the active site.

This sequence belongs to the protein kinase superfamily. Ser/Thr protein kinase family. As to expression, expressed in liver, kidney, pancreas, spleen, thymus and prostate.

It is found in the nucleus. It carries out the reaction L-seryl-[protein] + ATP = O-phospho-L-seryl-[protein] + ADP + H(+). It catalyses the reaction L-threonyl-[protein] + ATP = O-phospho-L-threonyl-[protein] + ADP + H(+). This Homo sapiens (Human) protein is Serine/threonine-protein kinase PDIK1L (PDIK1L).